Here is a 277-residue protein sequence, read N- to C-terminus: Sulfur carrier protein FdhD (277 aa).

The active-site Cysteine persulfide intermediate is cysteine 121. A Mo-bis(molybdopterin guanine dinucleotide)-binding site is contributed by phenylalanine 260–arginine 265.

Belongs to the FdhD family.

It is found in the cytoplasm. Functionally, required for formate dehydrogenase (FDH) activity. Acts as a sulfur carrier protein that transfers sulfur from IscS to the molybdenum cofactor prior to its insertion into FDH. The chain is Sulfur carrier protein FdhD from Escherichia coli O81 (strain ED1a).